Here is a 1938-residue protein sequence, read N- to C-terminus: Autophagy-related protein 2 homolog A (1938 aa).

The Chorein N-terminal domain occupies 14 to 111 (ERVCRYLLHH…QLTLQPRRGP (98 aa)). 7 positions are modified to phosphoserine: Ser765, Ser878, Ser892, Ser894, Ser1266, Ser1301, and Ser1309. The segment at 1242–1272 (DLHPPPRPPSPTEIAGQKLSESPASLPSCPP) is disordered. Residues 1315-1359 (LFPGERSGAPPPSPPVGGPAGSLGSCSEEKEDEREEEGDGDTLDS) form a disordered region. Residues 1343–1359 (EKEDEREEEGDGDTLDS) show a composition bias toward acidic residues. The interval 1358-1404 (DSDEFCILDAPGLGIPPRDGEPVVTQLHPGPIVVRDGYFSRPIGSTD) is WIPI-interacting. A Phosphoserine modification is found at Ser1402. Disordered stretches follow at residues 1438–1476 (PHPG…GSGR) and 1614–1657 (GETS…PSPP). Low complexity predominate over residues 1446–1464 (TGLSGPRSSPSRCSGPNRP).

Belongs to the ATG2 family. As to quaternary structure, interacts with ATG9A (via C-terminus). Interacts (via WIPI-interacting region) with WDR45B/WIPI3. Interacts (via WIPI-interacting region) with WDR45/WIPI4. Interacts with TMEM41B. Interacts with VMP1.

Its subcellular location is the preautophagosomal structure membrane. The protein resides in the lipid droplet. It is found in the endoplasmic reticulum membrane. The enzyme catalyses a 1,2-diacyl-sn-glycero-3-phospho-L-serine(in) = a 1,2-diacyl-sn-glycero-3-phospho-L-serine(out). It catalyses the reaction a 1,2-diacyl-sn-glycero-3-phosphoethanolamine(in) = a 1,2-diacyl-sn-glycero-3-phosphoethanolamine(out). Functionally, lipid transfer protein involved in autophagosome assembly. Tethers the edge of the isolation membrane (IM) to the endoplasmic reticulum (ER) and mediates direct lipid transfer from ER to IM for IM expansion. Binds to the ER exit site (ERES), which is the membrane source for autophagosome formation, and extracts phospholipids from the membrane source and transfers them to ATG9 (ATG9A or ATG9B) to the IM for membrane expansion. Lipid transfer activity is enhanced by WIPI1 and WDR45/WIPI4, which promote ATG2A-association with phosphatidylinositol 3-monophosphate (PI3P)-containing membranes. Also regulates lipid droplets morphology and distribution within the cell. This chain is Autophagy-related protein 2 homolog A, found in Homo sapiens (Human).